Here is a 79-residue protein sequence, read N- to C-terminus: UPF0154 protein SAG1601 (79 aa).

Residues 5–25 traverse the membrane as a helical segment; that stretch reads IWILLIIVALFGGLVGGIFIA.

The protein belongs to the UPF0154 family.

Its subcellular location is the membrane. The protein is UPF0154 protein SAG1601 of Streptococcus agalactiae serotype V (strain ATCC BAA-611 / 2603 V/R).